The primary structure comprises 31 residues: Photosystem I reaction center subunit XII (31 aa).

The chain crosses the membrane as a helical span at residues 7 to 26; the sequence is QVYIALLTALIPAFFALKLG.

It belongs to the PsaM family.

The protein resides in the plastid. It localises to the chloroplast thylakoid membrane. This chain is Photosystem I reaction center subunit XII, found in Euglena viridis (Cercaria viridis).